The following is a 338-amino-acid chain: Tetraacyldisaccharide 4'-kinase (338 aa).

Position 67–74 (Ile-67–Thr-74) interacts with ATP.

The protein belongs to the LpxK family.

It carries out the reaction a lipid A disaccharide + ATP = a lipid IVA + ADP + H(+). It functions in the pathway glycolipid biosynthesis; lipid IV(A) biosynthesis; lipid IV(A) from (3R)-3-hydroxytetradecanoyl-[acyl-carrier-protein] and UDP-N-acetyl-alpha-D-glucosamine: step 6/6. Its function is as follows. Transfers the gamma-phosphate of ATP to the 4'-position of a tetraacyldisaccharide 1-phosphate intermediate (termed DS-1-P) to form tetraacyldisaccharide 1,4'-bis-phosphate (lipid IVA). In Acidovorax sp. (strain JS42), this protein is Tetraacyldisaccharide 4'-kinase.